The chain runs to 437 residues: GTPase Der (437 aa).

EngA-type G domains follow at residues 3 to 167 and 176 to 352; these read NLVA…NKET and PRFA…ENRT. Residues 9–16, 56–60, 119–122, 182–189, 229–233, and 294–297 each bind GTP; these read GRPNVGKS, DTGGW, NKTD, GRPNAGKS, DTAGI, and NKWD. In terms of domain architecture, KH-like spans 353 to 437; it reads TKIPTARLNE…TPINIYIRQK (85 aa).

Belongs to the TRAFAC class TrmE-Era-EngA-EngB-Septin-like GTPase superfamily. EngA (Der) GTPase family. As to quaternary structure, associates with the 50S ribosomal subunit.

Its function is as follows. GTPase that plays an essential role in the late steps of ribosome biogenesis. The sequence is that of GTPase Der from Bacteroides thetaiotaomicron (strain ATCC 29148 / DSM 2079 / JCM 5827 / CCUG 10774 / NCTC 10582 / VPI-5482 / E50).